A 274-amino-acid polypeptide reads, in one-letter code: 4-hydroxy-tetrahydrodipicolinate reductase (274 aa).

NAD(+) is bound by residues 8 to 13, glutamate 34, 102 to 104, and 128 to 131; these read GALGRM, GTT, and SQNF. Histidine 160 (proton donor/acceptor) is an active-site residue. Position 161 (histidine 161) interacts with (S)-2,3,4,5-tetrahydrodipicolinate. The Proton donor role is filled by lysine 164. Position 170 to 171 (170 to 171) interacts with (S)-2,3,4,5-tetrahydrodipicolinate; sequence GT.

It belongs to the DapB family.

The protein localises to the cytoplasm. The enzyme catalyses (S)-2,3,4,5-tetrahydrodipicolinate + NAD(+) + H2O = (2S,4S)-4-hydroxy-2,3,4,5-tetrahydrodipicolinate + NADH + H(+). It catalyses the reaction (S)-2,3,4,5-tetrahydrodipicolinate + NADP(+) + H2O = (2S,4S)-4-hydroxy-2,3,4,5-tetrahydrodipicolinate + NADPH + H(+). It functions in the pathway amino-acid biosynthesis; L-lysine biosynthesis via DAP pathway; (S)-tetrahydrodipicolinate from L-aspartate: step 4/4. In terms of biological role, catalyzes the conversion of 4-hydroxy-tetrahydrodipicolinate (HTPA) to tetrahydrodipicolinate. The protein is 4-hydroxy-tetrahydrodipicolinate reductase of Methanocaldococcus jannaschii (strain ATCC 43067 / DSM 2661 / JAL-1 / JCM 10045 / NBRC 100440) (Methanococcus jannaschii).